A 310-amino-acid chain; its full sequence is MFKHVTVLLKETVDGLDIKPDGTYVDCTLGGGGHSSYLLSQLTEGGKLIAFDQDEIAIQNAKEKFSSYGEQFITVKSNFRYLAEKLQEIGITEVDGILFDLGVSSPQLDTPERGFSYHHDAPLDMRMDQDAPLTAYDVVNSWSYEQLVRIFFQYGEEKFSKQIARKIEAYRENKAIETTGELVELIKEGIPAPARRTGGHPAKRVFQAIRIAVNDELKVFEEALESAIEMVKPGGRVSVITFHSLEDRICKTTFKRNSTTPQLPPGLPIIPDEFKPKLKLITRKPILPSDIELEENNRARSAKLRIAEKR.

S-adenosyl-L-methionine-binding positions include 32 to 34 (GGH), aspartate 52, phenylalanine 79, aspartate 100, and glutamine 107.

It belongs to the methyltransferase superfamily. RsmH family.

Its subcellular location is the cytoplasm. The catalysed reaction is cytidine(1402) in 16S rRNA + S-adenosyl-L-methionine = N(4)-methylcytidine(1402) in 16S rRNA + S-adenosyl-L-homocysteine + H(+). Functionally, specifically methylates the N4 position of cytidine in position 1402 (C1402) of 16S rRNA. The polypeptide is Ribosomal RNA small subunit methyltransferase H (Bacillus cereus (strain G9842)).